The primary structure comprises 300 residues: Glutamyl-Q tRNA(Asp) synthetase (300 aa).

Residues arginine 8–threonine 12 and aspartate 44 each bind L-glutamate. The 'HIGH' region signature appears at proline 11 to serine 21. Zn(2+)-binding residues include cysteine 100, cysteine 102, tyrosine 122, and cysteine 126. Residues tyrosine 181 and arginine 199 each coordinate L-glutamate. The short motif at lysine 237 to glutamine 241 is the 'KMSKS' region element. Lysine 240 contributes to the ATP binding site.

This sequence belongs to the class-I aminoacyl-tRNA synthetase family. GluQ subfamily. Requires Zn(2+) as cofactor.

In terms of biological role, catalyzes the tRNA-independent activation of glutamate in presence of ATP and the subsequent transfer of glutamate onto a tRNA(Asp). Glutamate is transferred on the 2-amino-5-(4,5-dihydroxy-2-cyclopenten-1-yl) moiety of the queuosine in the wobble position of the QUC anticodon. The sequence is that of Glutamyl-Q tRNA(Asp) synthetase from Synechococcus sp. (strain ATCC 27144 / PCC 6301 / SAUG 1402/1) (Anacystis nidulans).